The chain runs to 424 residues: Enolase (424 aa).

Position 165 (Gln-165) interacts with (2R)-2-phosphoglycerate. Residue Glu-207 is the Proton donor of the active site. Residues Asp-244, Glu-283, and Asp-310 each contribute to the Mg(2+) site. The (2R)-2-phosphoglycerate site is built by Lys-335, Arg-364, Ser-365, and Lys-386. Lys-335 (proton acceptor) is an active-site residue.

The protein belongs to the enolase family. Requires Mg(2+) as cofactor.

It localises to the cytoplasm. Its subcellular location is the secreted. The protein localises to the cell surface. The catalysed reaction is (2R)-2-phosphoglycerate = phosphoenolpyruvate + H2O. Its pathway is carbohydrate degradation; glycolysis; pyruvate from D-glyceraldehyde 3-phosphate: step 4/5. Its function is as follows. Catalyzes the reversible conversion of 2-phosphoglycerate (2-PG) into phosphoenolpyruvate (PEP). It is essential for the degradation of carbohydrates via glycolysis. This is Enolase from Chlamydia muridarum (strain MoPn / Nigg).